Consider the following 144-residue polypeptide: Ribosome-binding factor A (144 aa).

Positions D120–A144 are disordered. Residues R129–A144 are compositionally biased toward acidic residues.

It belongs to the RbfA family. In terms of assembly, monomer. Binds 30S ribosomal subunits, but not 50S ribosomal subunits or 70S ribosomes.

Its subcellular location is the cytoplasm. Functionally, one of several proteins that assist in the late maturation steps of the functional core of the 30S ribosomal subunit. Associates with free 30S ribosomal subunits (but not with 30S subunits that are part of 70S ribosomes or polysomes). Required for efficient processing of 16S rRNA. May interact with the 5'-terminal helix region of 16S rRNA. The sequence is that of Ribosome-binding factor A from Aeromonas hydrophila subsp. hydrophila (strain ATCC 7966 / DSM 30187 / BCRC 13018 / CCUG 14551 / JCM 1027 / KCTC 2358 / NCIMB 9240 / NCTC 8049).